We begin with the raw amino-acid sequence, 277 residues long: Probable cytochrome c oxidase subunit 3 (277 aa).

Helical transmembrane passes span 20-40, 45-65, 88-108, 173-193, 211-231, and 255-275; these read PWPI…VSFM, FNHY…YSWW, IGMA…FASF, CVTA…MQAY, FYLA…FLIV, and AWYW…VYIF.

It belongs to the cytochrome c oxidase subunit 3 family.

Its subcellular location is the cell membrane. It catalyses the reaction 4 Fe(II)-[cytochrome c] + O2 + 8 H(+)(in) = 4 Fe(III)-[cytochrome c] + 2 H2O + 4 H(+)(out). The sequence is that of Probable cytochrome c oxidase subunit 3 (ctaE) from Rickettsia bellii (strain RML369-C).